A 967-amino-acid chain; its full sequence is Transmembrane channel-like protein 5 (967 aa).

Composition is skewed to polar residues over residues 1–10 (MSSFHQNSSY), 21–31 (GSRNHTHNYLE), 53–62 (NPHSSGSRTN), and 168–184 (QDNS…SNLP). The tract at residues 1–240 (MSSFHQNSSY…EEGDGYSSSK (240 aa)) is disordered. The Extracellular segment spans residues 1 to 420 (MSSFHQNSSY…YFSFLRWLLK (420 aa)). The chain crosses the membrane as a helical span at residues 421–441 (FNIFSFVMNFSFIIIPQFTVG). Topologically, residues 442-449 (AKNTLQFT) are cytoplasmic. A helical membrane pass occupies residues 450-470 (GLEFFTGAGYFGDTVMYYGFY). At 471-487 (TNSTIRHRMGGASYNMQ) the chain is on the extracellular side. The chain crosses the membrane as a helical span at residues 488 to 508 (LAYIFTIGACLVVCFFSLLFS). Topologically, residues 509–581 (MAKYFRNNFI…NQQLTRFSAH (73 aa)) are cytoplasmic. The helical transmembrane segment at 582 to 602 (VAAWLVSTGVTAACCVAVYYL) threads the bilayer. Residues 603-616 (AEYNSEFLKTHRNP) are Extracellular-facing. Residues 617-637 (GAVLLLPFVVSCINLAVPRFY) traverse the membrane as a helical segment. At 638–660 (SMFRLVERYEIPRQEVYVLLVRN) the chain is on the cytoplasmic side. A helical transmembrane segment spans residues 661-681 (IFLKISIVGILCYYWLNIVAL). Topologically, residues 682 to 694 (SGEECWETLIGQD) are extracellular. Residues 695-715 (IYRLLLMDFVFSLADSLLGEF) form a helical membrane-spanning segment. The Cytoplasmic portion of the chain corresponds to 716 to 749 (LRRLIGMKFTSLSLQEFDIARNVLELIYAQTLTW). Residues 750-770 (LGIFFCPLLPFIQMITLFIMF) form a helical membrane-spanning segment. At 771-796 (YVKNVSLMMNFQPPSKAWRASQMITF) the chain is on the extracellular side. The helical transmembrane segment at 797–817 (FIFLLFFPSFTGVLCTLAITI) threads the bilayer. Topologically, residues 818 to 861 (WRLKPSADCGPFRGLPSFIQSIYSWIDTLSRRPGYLWVVWIYQN) are cytoplasmic. Residues 862–882 (LIGSVHFFFILTLIVLIITYL) traverse the membrane as a helical segment. Residues 883–967 (YWQITEGRKV…RSAQEENPIA (85 aa)) lie on the Extracellular side of the membrane.

This sequence belongs to the TMC family. As to expression, ubiquitously expressed.

Its subcellular location is the membrane. In terms of biological role, probable component of an ion channel. Molecular function hasn't been characterized yet. The polypeptide is Transmembrane channel-like protein 5 (Mus musculus (Mouse)).